Here is a 111-residue protein sequence, read N- to C-terminus: Iron-sulfur cluster insertion protein ErpA (111 aa).

Cys39, Cys103, and Cys105 together coordinate iron-sulfur cluster.

It belongs to the HesB/IscA family. In terms of assembly, homodimer. Iron-sulfur cluster is required as a cofactor.

Required for insertion of 4Fe-4S clusters for at least IspG. In Acinetobacter baumannii (strain AB307-0294), this protein is Iron-sulfur cluster insertion protein ErpA.